The sequence spans 406 residues: Bifunctional enzyme IspD/IspF (406 aa).

The tract at residues 1–247 is 2-C-methyl-D-erythritol 4-phosphate cytidylyltransferase; that stretch reads MSLIRVNGEA…ALFFNPAKDT (247 aa). The tract at residues 248-406 is 2-C-methyl-D-erythritol 2,4-cyclodiphosphate synthase; it reads FIGMGFDTHA…HVSMRYKQKL (159 aa). A divalent metal cation is bound by residues Asp254 and His256. 4-CDP-2-C-methyl-D-erythritol 2-phosphate-binding positions include 254 to 256 and 280 to 281; these read DTH and HS. His288 is a binding site for a divalent metal cation. 4-CDP-2-C-methyl-D-erythritol 2-phosphate is bound by residues 302–304, 307–311, 378–381, Phe385, and Lys388; these read DIG, FPDND, and TTME.

This sequence in the N-terminal section; belongs to the IspD/TarI cytidylyltransferase family. IspD subfamily. It in the C-terminal section; belongs to the IspF family. A divalent metal cation serves as cofactor.

The catalysed reaction is 2-C-methyl-D-erythritol 4-phosphate + CTP + H(+) = 4-CDP-2-C-methyl-D-erythritol + diphosphate. It catalyses the reaction 4-CDP-2-C-methyl-D-erythritol 2-phosphate = 2-C-methyl-D-erythritol 2,4-cyclic diphosphate + CMP. The protein operates within isoprenoid biosynthesis; isopentenyl diphosphate biosynthesis via DXP pathway; isopentenyl diphosphate from 1-deoxy-D-xylulose 5-phosphate: step 2/6. It functions in the pathway isoprenoid biosynthesis; isopentenyl diphosphate biosynthesis via DXP pathway; isopentenyl diphosphate from 1-deoxy-D-xylulose 5-phosphate: step 4/6. Its function is as follows. Bifunctional enzyme that catalyzes the formation of 4-diphosphocytidyl-2-C-methyl-D-erythritol from CTP and 2-C-methyl-D-erythritol 4-phosphate (MEP) (IspD), and catalyzes the conversion of 4-diphosphocytidyl-2-C-methyl-D-erythritol 2-phosphate (CDP-ME2P) to 2-C-methyl-D-erythritol 2,4-cyclodiphosphate (ME-CPP) with a corresponding release of cytidine 5-monophosphate (CMP) (IspF). This Helicobacter pylori (strain Shi470) protein is Bifunctional enzyme IspD/IspF.